A 196-amino-acid polypeptide reads, in one-letter code: GTP cyclohydrolase-2 (196 aa).

R49–E53 lines the GTP pocket. C54, C65, and C67 together coordinate Zn(2+). Residues Q70, E92–R94, and T114 each bind GTP. The Proton acceptor role is filled by D126. R128 (nucleophile) is an active-site residue. The GTP site is built by T149 and K154.

The protein belongs to the GTP cyclohydrolase II family. Homodimer. Zn(2+) serves as cofactor.

The enzyme catalyses GTP + 4 H2O = 2,5-diamino-6-hydroxy-4-(5-phosphoribosylamino)-pyrimidine + formate + 2 phosphate + 3 H(+). The protein operates within cofactor biosynthesis; riboflavin biosynthesis; 5-amino-6-(D-ribitylamino)uracil from GTP: step 1/4. In terms of biological role, catalyzes the conversion of GTP to 2,5-diamino-6-ribosylamino-4(3H)-pyrimidinone 5'-phosphate (DARP), formate and pyrophosphate. The polypeptide is GTP cyclohydrolase-2 (Yersinia pestis).